The chain runs to 453 residues: MINNLSISMTKVIKIILAIIIILFNTLSIFANTTTLSPIKITKGNCTQIPIAINFFAAKSNEEHGLSQNIVSIISNDLNISKIFAPISSDLFIETEQGVAHIPLFTAWSQINANILINGEITKIDSTDFKVTFVVWDVFSAKEITRKSFTFPSQLWRSTAHKIADQIYKHVTGSKGNFNTKIVYVSESNSSKGKIRRIAIMDQDGANHNYITNGKNHVITPVFSPNNNQILYVSYHNKIPTVRIHDLNSGNNKILASFNGITFSPRFSPDGNKILVSNSSTKNVTHIYEINLLTGKIKQLTKGQSINTSPSYSPDGSKIAFVSDRSGSTQIYIMNDQGGNIKRLTSQPGAYTTPAWSPTNNYIAFTKIEAGEFSIGVIKLDGSNKRIIATKHLVEGPSWAPDGKTIIFSRAYKATKSTSTKVKLYSVDCTGYNEREIQTPENASDPNWSNEYE.

The signal sequence occupies residues 1-31; it reads MINNLSISMTKVIKIILAIIIILFNTLSIFA.

Belongs to the TolB family. In terms of assembly, the Tol-Pal system is composed of five core proteins: the inner membrane proteins TolA, TolQ and TolR, the periplasmic protein TolB and the outer membrane protein Pal. They form a network linking the inner and outer membranes and the peptidoglycan layer.

The protein resides in the periplasm. Functionally, part of the Tol-Pal system, which plays a role in outer membrane invagination during cell division and is important for maintaining outer membrane integrity. This chain is Tol-Pal system protein TolB, found in Orientia tsutsugamushi (strain Ikeda) (Rickettsia tsutsugamushi).